We begin with the raw amino-acid sequence, 454 residues long: Innexin-19 (454 aa).

The Cytoplasmic portion of the chain corresponds to 1 to 48 (MWRTPASTGPLRQDRQMFFHATLARSFINALSVRGDDDAVDRLNYYYT). Residues 49–69 (PLILAVCCLVISAKQYGGTPI) traverse the membrane as a helical segment. Residues 70-118 (ECWVNPHSRESMEEYIESYCWIQNTYWIPMYENVPDDHTAREEKQIGYY) are Extracellular-facing. Residues 119-139 (QWVPFILIAEALMFSLPCIFW) traverse the membrane as a helical segment. At 140–214 (RLCSFQSGLN…SRFLSGQCLS (75 aa)) the chain is on the cytoplasmic side. The chain crosses the membrane as a helical span at residues 215–235 (ILHSFTKLLYSMNVVAQFLIL). At 236 to 300 (NACLKSSDFL…ALLINIINEK (65 aa)) the chain is on the extracellular side. A helical transmembrane segment spans residues 301–321 (VFAFLWCWYMILAIITTCSFI). The Cytoplasmic portion of the chain corresponds to 322–454 (YWIANSFIHS…SNPGQTKSFL (133 aa)).

Belongs to the pannexin family. Specifically expressed in sensory neurons and interneurons in the head and tail. Expressed in neurons AWC, ASH, AFD, ASI, ADL, ASK, BAG, AWB, and ADF (head sensory neurons); ADA, AIZ, RIC, AIY, and AIM (head interneurons); PHA and PHB (tail sensory neurons); and PVC and PVQ (tail interneurons).

It localises to the cell membrane. The protein resides in the cell junction. Its subcellular location is the gap junction. Structural component of the gap junctions that specifically coordinates left-right asymmetry in the developing nervous system. Acts by forming gap junction network linking embryonic neurons and providing electrical coupling between cells, leading to promote or inhibit AWC signaling. Required for the left and right AWC olfactory neurons to establish asymmetric patterns of gene expression during embryogenesis. Acts autonomously. The sequence is that of Innexin-19 (inx-19) from Caenorhabditis elegans.